A 128-amino-acid chain; its full sequence is MGLIWGLFSVIIASVAQLSLGFAASHLPPMTHLWDFIAALLAFGLDARILLLGLLGYLLSVFCWYKTLHKLALSKAYALLSMSYVLVWIASMVLPGWEGTFSLKALLGVACIMSGLMLIFLPTTKQRY.

Residues 1 to 2 (MG) lie on the Cytoplasmic side of the membrane. Residues 3–23 (LIWGLFSVIIASVAQLSLGFA) form a helical membrane-spanning segment. Over 24–35 (ASHLPPMTHLWD) the chain is Periplasmic. A helical transmembrane segment spans residues 36 to 56 (FIAALLAFGLDARILLLGLLG). The Cytoplasmic segment spans residues 57–76 (YLLSVFCWYKTLHKLALSKA). The helical transmembrane segment at 77–97 (YALLSMSYVLVWIASMVLPGW) threads the bilayer. Residues 98 to 100 (EGT) lie on the Periplasmic side of the membrane. A helical membrane pass occupies residues 101–121 (FSLKALLGVACIMSGLMLIFL). Over 122 to 128 (PTTKQRY) the chain is Cytoplasmic.

This sequence belongs to the ArnF family. As to quaternary structure, heterodimer of ArnE and ArnF.

The protein localises to the cell inner membrane. It functions in the pathway bacterial outer membrane biogenesis; lipopolysaccharide biosynthesis. Translocates 4-amino-4-deoxy-L-arabinose-phosphoundecaprenol (alpha-L-Ara4N-phosphoundecaprenol) from the cytoplasmic to the periplasmic side of the inner membrane. This chain is Probable 4-amino-4-deoxy-L-arabinose-phosphoundecaprenol flippase subunit ArnF, found in Shigella boydii serotype 4 (strain Sb227).